The following is a 394-amino-acid chain: Na(+)/H(+) antiporter NhaA (394 aa).

Transmembrane regions (helical) follow at residues 14–34 (AGGLILIIAAAIALLMANSAL), 59–79 (LLLWINDGLMAVFFLMVGLEV), 95–115 (VFPAIAALGGMLAPALIYLLF), 125–145 (GWAIPAATDIAFALGVMALLG), 154–174 (VFLLALAIIDDLGVIIIIALF), 179–199 (VSLQSLGIAAAAIALLAYMNW), 213–233 (LVLWVCILKSGVHATLAGVIV), 254–274 (GLHPWVAYLILPLFAFANAGV), 292–312 (IATGLFIGKPLGIFTFSWLAV), 328–348 (IFAVSVLCGIGFTMSIFIASL), and 363–383 (LGILLGSTTAAVVGYSLLRLV).

This sequence belongs to the NhaA Na(+)/H(+) (TC 2.A.33) antiporter family.

Its subcellular location is the cell inner membrane. The catalysed reaction is Na(+)(in) + 2 H(+)(out) = Na(+)(out) + 2 H(+)(in). In terms of biological role, na(+)/H(+) antiporter that extrudes sodium in exchange for external protons. This chain is Na(+)/H(+) antiporter NhaA, found in Yersinia pseudotuberculosis serotype IB (strain PB1/+).